The primary structure comprises 385 residues: Exopolygalacturonase rpg15 (385 aa).

Residues 1 to 26 (MVRFISFTSPIAALLLLSFGVKHAST) form the signal peptide. 4 N-linked (GlcNAc...) asparagine glycosylation sites follow: N143, N161, N164, and N180. PbH1 repeat units lie at residues 165–195 (STNLVLHDFTLHTVSNNSYLPKNTDALDLYH), 196–217 (SSGITFRDSMLTIGDDCVAIKE), 219–241 (VEKVIVSNVTCRGGHGYSIGSLG), and 249–270 (VKHVNFRNSTCIDCENGVRVKT). The active-site Proton donor is D210. The cysteines at positions 212 and 229 are disulfide-linked. Residue N226 is glycosylated (N-linked (GlcNAc...) asparagine). H233 is a catalytic residue. 3 N-linked (GlcNAc...) asparagine glycosylation sites follow: N256, N319, and N343. Cysteines 344 and 350 form a disulfide. The PbH1 5 repeat unit spans residues 350 to 376 (CSDITFSGIDITKASNTTDNVCVYLEG). The N-linked (GlcNAc...) asparagine glycan is linked to N365.

This sequence belongs to the glycosyl hydrolase 28 family. In terms of processing, N-glycosylated.

It is found in the secreted. It catalyses the reaction [(1-&gt;4)-alpha-D-galacturonosyl](n) + H2O = alpha-D-galacturonate + [(1-&gt;4)-alpha-D-galacturonosyl](n-1). Functionally, specific in hydrolyzing the terminal glycosidic bond of polygalacturonic acid and oligogalacturonates. The polypeptide is Exopolygalacturonase rpg15 (Rhizopus delemar (strain RA 99-880 / ATCC MYA-4621 / FGSC 9543 / NRRL 43880) (Mucormycosis agent)).